We begin with the raw amino-acid sequence, 123 residues long: Unknown 12C protein (123 aa).

Positions 1–17 (MMSALFLVLSVSLLVSG) are cleaved as a signal peptide.

Contains 6 disulfide bonds. As to expression, expressed in acontia, a specialised envenomation structure laden with batteries of venom-containing nematocysts found only in the superfamily Metridioidea.

It localises to the secreted. Its subcellular location is the nematocyst. Cysteine-rich protein with probable toxin activity. The polypeptide is Unknown 12C protein (Calliactis polypus (Hermit crab anemone)).